The primary structure comprises 231 residues: MARGRSRKRSRSSSRSPSGSGREKGGARSSAASPGPRHRLSSAAAREGRKKEGRKKKKRKAKASSSDRSSSSRSSSSSSSTSSSDSDTRAKQHSRRKRGKHKDKKKKKKMKKKLKKKSKERVKEERGVSEALPGPSLELWQKEPLADSGPVLTDEQKSRIQAMKPMTKEEWDARQSVIRRVVDPETGRTRLIKGDGEVLEEIVSKERHKEINKQATRGDGLAFQVRTGMLK.

Basic residues-rich tracts occupy residues 1–12 (MARGRSRKRSRS) and 51–62 (KEGRKKKKRKAK). A disordered region spans residues 1–155 (MARGRSRKRS…ADSGPVLTDE (155 aa)). A compositionally biased stretch (low complexity) spans 63–85 (ASSSDRSSSSRSSSSSSSTSSSD). Over residues 91 to 120 (KQHSRRKRGKHKDKKKKKKMKKKLKKKSKE) the composition is skewed to basic residues.

This sequence belongs to the ARL6IP4 family.

It localises to the nucleus. It is found in the nucleolus. The protein localises to the nucleus speckle. Functionally, may be involved in modulating alternative pre-mRNA splicing. In Gallus gallus (Chicken), this protein is ADP-ribosylation factor-like protein 6-interacting protein 4 (ARL6IP4).